Here is a 3088-residue protein sequence, read N- to C-terminus: MEEFLQRAKSKLNRSKRLEKVHVVIGPKSCDLDSLISTFTYAYFLDKVSPPGVLCLPVLNIPRTEFNYFTETRFILEELNISESFHIFRDEINLHQLNDEGKLSITLVGSSVLASEDKTLESAVVKVINPVEQSDANVEFRESSSSLVLKEILQEAPELITEQLAHRLRGSILFKWMTMESEKISEKQEEILSILEEKFPNLPPREDIINVLQETQFSAQGLSIEQTMLKDLKELSDGEIKVAISTVSMNLENCLFHSNITSDLKAFTDKFGFDVLILFSSYLSEEQQPRRQIAVYSENMELCSQICCELEECQNPCLELEPFDCGCDEILVYQQEDPSVTCDQVVLVVKEVINRRCPEMVSNSRTSSTEAVAGSAPLSQGSSGIMELYGSDIEPQPSSVNFIENPPDLNDSNQAQVDANVDLVSPDSGLATIRSSRSSKESSVFLSDDSPVGEGAGPHHTLLPGLDSYSPIPEGAVAEEHAWSGEHGEHFDLFNFDPAPMASGQSQQSSHSADYSPADDFFPNSDLSEGQLPAGPEGLDGMGTNMSNYSSSSLLSGAGKDSLVEHDEEFVQRQDSPRDNSERNLSLTDFVGDESPSPERLKNTGKRIPPTPMNSLVESSPSTEEPASLYTEDMTQKATDTGHMGPPQTHARCSSWWGGLEIDSKNIADAWSSSEQESVFQSPESWKEHKPSSIDRRASDSVFQPKSLEFTKSGPWESEFGQPELGSNDIQDKNEESLPFQNLPMEKSPLPNTSPQGTNHLIEDFASLWHSGRSPTAMPEPWGNPTDDGEPAAVAPFPAWSAFGKEDHDEALKNTWNLHPTSSKTPSVRDPNEWAMAKSGFAFSSSELLDNSPSEINNEAAPEIWGKKNNDSRDHIFAPGNPSSDLDHTWTNSKPPKEDQNGLVDPKTRGKVYEKVDSWNLFEENMKKGGSDVLVPWEDSFLSYKCSDYSASNLGEDSVPSPLDTNYSTSDSYTSPTFAGDEKETEHKPFAKEEGFESKDGNSTAEETDIPPQSLQQSSRNRISSGPGNLDMWASPHTDNSSEINTTHNLDENELKTEHTDGKNISMEDDVGESSQSSYDDPSMMQLYNETNRQLTLLHSSTNSRQTAPDSLDLWNRVILEDTQSTATISDMDNDLDWDDCSGGAAIPSDGQTEGYMAEGSEPETRFTVRQLEPWGLEYQEANQVDWELPASDEHTKDSAPSEHHTLNEKSGQLIANSIWDSVMRDKDMSSFMLPGSSHITDSEQRELPPEIPSHSANVKDTHSPDAPAASGTSESEALISHLDKQDTERETLQSDAASLATRLENPGYFPHPDPWKGHGDGQSESEKEAQGATDRGHLDEEEVIASGVENASGISEKGQSDQELSSLVASEHQEICIKSGKISSLAVTFSPQTEEPEEVLEYEEGSYNLDSRDVQTGMSADNLQPKDTHEKHLMSQRNSGETTETSDGMNFTKYVSVPEKDLEKTEECNFLEPENVGGGPPHRVPRSLDFGDVPIDSDVHVSSTCSEITKNLDVKGSENSLPGAGSSGNFDRDTISSEYTHSSASSPELNDSSVALSSWGQQPSSGYQEENQGNWSEQNHQESELITTDGQVEIVTKVKDLEKNRINEFEKSFDRKTPTFLEIWNDSVDGDSFSSLSSPETGKYSEHSGTHQESNLIASYQEKNEHDISATVQPEDARVISTSSGSDDDSVGGEESIEEEIQVANCHVAEDESRAWDSLNESNKFLVTADPKSENIYDYLDSSEPAENENKSNPFCDNQQSSPDPWTFSPLTETEMQITAVEKEKRSSPETGTTGDVAWQISPKASFPKNEDNSQLEMLGFSADSTEWWKASPQEGRLIESPFERELSDSSGVLEINSSVHQNASPWGVPVQGDIEPVETHYTNPFSDNHQSPFLEGNGKNSHEQLWNIQPRQPDPDADKFSQLVKLDQIKEKDSREQTFVSAAGDELTPETPTQEQCQDTMLPVCDHPDTAFTHAEENSCVTSNVSTNEGQETNQWEQEKSYLGEMTNSSIATENFPAVSSPTQLIMKPGSEWDGSTPSEDSRGTFVPDILHGNFQEGGQLASAAPDLWIDAKKPFSLKADGENPDILTHCEHDSNSQASDSPDICHDSEAKQETEKHLSACMGPEVESSELCLTEPEIDEEPIYEPGREFVPSNAELDSENATVLPPIGYQADIKGSSQPASHKGSPEPSEINGDNSTGLQVSEKGASPDMAPILEPVDRRIPRIENVATSIFVTHQEPTPEGDGSWISDSFSPESQPGARALFDGDPHLSTENPALVPDALLASDTCLDISEAAFDHSFSDASGLNTSTGTIDDMSKLTLSEGHPETPVDGDLGKQDICSSEASWGDFEYDVMGQNIDEDLLREPEHFLYGGDPPLEEDSLKQSLAPYTPPFDLSYLTEPAQSAETIEEAGSPEDESLGCRAAEIVLSALPDRRSEGNQAETKNRLPGSQLAVLHIREDPESVYLPVGAGSNILSPSNVDWEVETDNSDLPAGGDIGPPNGASKEISELEEEKTIPTKEPEQIKSEYKEERCTEKNEDRHALHMDYILVNREENSHSKPETCEERESIAELELYVGSKETGLQGTQLASFPDTCQPASLNERKGLSAEKMSSKSDTRSSFESPAQDQSWMFLGHSEVGDPSLDARDSGPGWSGKTVEPFSELGLGEGPQLQILEEMKPLESLALEEASGPVSQSQKSKSRGRAGPDAVTLQAVTHDNEWEMLSPQPVQKNMIPDTEMEEETEFLELGTRISRPNGLLSEDVGMDIPFEEGVLSPSAADMRPEPPNSLDLNDTHPRRIKLTAPNINLSLDQSEGSILSDDNLDSPDEIDINVDELDTPDEADSFEYTGHDPTANKDSGQESESIPEYTAEEEREDNRLWRTVVIGEQEQRIDMKVIEPYRRVISHGGYYGDGLNAIIVFAACFLPDSSRADYHYVMENLFLYVISTLELMVAEDYMIVYLNGATPRRRMPGLGWMKKCYQMIDRRLRKNLKSFIIVHPSWFIRTILAVTRPFISSKFSSKIKYVNSLSELSGLIPMDCIHIPESIIKLDEELREASEAAKTSCLYNDPEMSSMEKDIDLKLKEKP.

Met1 bears the N-acetylmethionine mark. The short motif at 109 to 111 (GSS) is the DHH motif element. 22 disordered regions span residues 433–468 (IRSS…GLDS), 490–628 (HFDL…EPAS), 673–759 (SSEQ…QGTN), 771–795 (SGRS…AAVA), 846–909 (SELL…PKTR), 952–1080 (SNLG…SSYD), 1192–1211 (SDEH…NEKS), 1231–1371 (SFML…LVAS), 1413–1452 (RDVQ…GMNF), 1472–1491 (LEPE…SLDF), 1515–1585 (VKGS…QESE), 1632–1698 (DSFS…EESI), 1741–1768 (LDSS…DPWT), 1782–1813 (VEKE…KNED), 2089–2114 (ILTH…SEAK), 2173–2215 (YQAD…PDMA), 2240–2260 (QEPT…PESQ), 2492–2542 (SDLP…KNED), 2589–2667 (TQLA…SELG), 2687–2710 (ALEE…AGPD), 2814–2833 (QSEG…EIDI), and 2841–2875 (PDEA…AEEE). The segment covering 503-512 (SGQSQQSSHS) has biased composition (low complexity). Basic and acidic residues predominate over residues 562–582 (SLVEHDEEFVQRQDSPRDNSE). 2 stretches are compositionally biased toward polar residues: residues 613-625 (MNSL…STEE) and 673-684 (SSEQESVFQSPE). The segment covering 685–699 (SWKEHKPSSIDRRAS) has biased composition (basic and acidic residues). A compositionally biased stretch (polar residues) spans 750–759 (LPNTSPQGTN). The segment covering 846–857 (SELLDNSPSEIN) has biased composition (polar residues). The span at 865–876 (WGKKNNDSRDHI) shows a compositional bias: basic and acidic residues. Polar residues predominate over residues 881 to 894 (NPSSDLDHTWTNSK). Residues 895–909 (PPKEDQNGLVDPKTR) show a composition bias toward basic and acidic residues. Residues 964 to 977 (DTNYSTSDSYTSPT) are compositionally biased toward low complexity. Residues 980 to 1000 (GDEKETEHKPFAKEEGFESKD) show a composition bias toward basic and acidic residues. Composition is skewed to polar residues over residues 1001-1027 (GNST…SSGP) and 1037-1048 (HTDNSSEINTTH). Basic and acidic residues-rich tracts occupy residues 1049–1062 (NLDE…HTDG), 1192–1208 (SDEH…HTLN), 1282–1293 (HLDKQDTERETL), 1314–1339 (DPWK…RGHL), and 1425–1434 (QPKDTHEKHL). Polar residues predominate over residues 1436 to 1450 (SQRNSGETTETSDGM). The segment covering 1537–1585 (SSEYTHSSASSPELNDSSVALSSWGQQPSSGYQEENQGNWSEQNHQESE) has biased composition (polar residues). Over residues 1687-1698 (SDDDSVGGEESI) the composition is skewed to acidic residues. A compositionally biased stretch (polar residues) spans 1752–1768 (KSNPFCDNQQSSPDPWT). 2 stretches are compositionally biased toward basic and acidic residues: residues 2516–2542 (EKTI…KNED) and 2604–2622 (NERK…DTRS). The span at 2623–2632 (SFESPAQDQS) shows a compositional bias: polar residues. Residues 2823 to 2833 (DNLDSPDEIDI) are compositionally biased toward acidic residues. Positions 2895–3056 (DMKVIEPYRR…SIIKLDEELR (162 aa)) constitute a CRAL-TRIO domain.

Belongs to the PPase class C family. Prune subfamily. In terms of tissue distribution, a high level of expression seen in the nervous system (brain, cerebellum and spinal cord) as well as adrenal gland. Expressed at high levels in noneuroblastoma, rhabdomyosarcoma, melanoma and some osteosarcoma cell lines, whereas at only low levels in cancer cell lines of liver, breast, thyroid and colon. Expression is significantly higher in favorable tumors than aggressive ones.

The protein resides in the cytoplasm. In terms of biological role, may play an important role in regulating differentiation, survival and aggressiveness of the tumor cells. This chain is Protein prune homolog 2 (PRUNE2), found in Homo sapiens (Human).